Consider the following 159-residue polypeptide: Large ribosomal subunit protein eL24 (159 aa).

The segment at 118 to 159 is disordered; sequence ANKAVRAAKAAANKEKKASQPKTQQKTAKNVKTAAPRVGGKR. Over residues 137 to 147 the composition is skewed to polar residues; that stretch reads QPKTQQKTAKN.

The protein belongs to the eukaryotic ribosomal protein eL24 family.

In Caenorhabditis elegans, this protein is Large ribosomal subunit protein eL24.